Reading from the N-terminus, the 121-residue chain is Small ribosomal subunit protein bS16 (121 aa).

Residues 97–114 (LAKAKTKDGDNDSSKAES) show a composition bias toward basic and acidic residues. The disordered stretch occupies residues 97 to 121 (LAKAKTKDGDNDSSKAESESNEAET).

This sequence belongs to the bacterial ribosomal protein bS16 family.

The polypeptide is Small ribosomal subunit protein bS16 (Prochlorococcus marinus (strain MIT 9301)).